A 574-amino-acid chain; its full sequence is Proline--tRNA ligase (574 aa).

It belongs to the class-II aminoacyl-tRNA synthetase family. ProS type 1 subfamily. As to quaternary structure, homodimer.

Its subcellular location is the cytoplasm. The catalysed reaction is tRNA(Pro) + L-proline + ATP = L-prolyl-tRNA(Pro) + AMP + diphosphate. Functionally, catalyzes the attachment of proline to tRNA(Pro) in a two-step reaction: proline is first activated by ATP to form Pro-AMP and then transferred to the acceptor end of tRNA(Pro). As ProRS can inadvertently accommodate and process non-cognate amino acids such as alanine and cysteine, to avoid such errors it has two additional distinct editing activities against alanine. One activity is designated as 'pretransfer' editing and involves the tRNA(Pro)-independent hydrolysis of activated Ala-AMP. The other activity is designated 'posttransfer' editing and involves deacylation of mischarged Ala-tRNA(Pro). The misacylated Cys-tRNA(Pro) is not edited by ProRS. This Oleidesulfovibrio alaskensis (strain ATCC BAA-1058 / DSM 17464 / G20) (Desulfovibrio alaskensis) protein is Proline--tRNA ligase.